Here is a 250-residue protein sequence, read N- to C-terminus: Ribonuclease PH (250 aa).

Residues arginine 87 and 125 to 127 (GTR) contribute to the phosphate site.

The protein belongs to the RNase PH family. As to quaternary structure, homohexameric ring arranged as a trimer of dimers.

The catalysed reaction is tRNA(n+1) + phosphate = tRNA(n) + a ribonucleoside 5'-diphosphate. In terms of biological role, phosphorolytic 3'-5' exoribonuclease that plays an important role in tRNA 3'-end maturation. Removes nucleotide residues following the 3'-CCA terminus of tRNAs; can also add nucleotides to the ends of RNA molecules by using nucleoside diphosphates as substrates, but this may not be physiologically important. Probably plays a role in initiation of 16S rRNA degradation (leading to ribosome degradation) during starvation. This Moorella thermoacetica (strain ATCC 39073 / JCM 9320) protein is Ribonuclease PH.